The following is a 577-amino-acid chain: Arginine--tRNA ligase (577 aa).

The 'HIGH' region motif lies at 122-132; it reads PNVAKEMHVGH.

The protein belongs to the class-I aminoacyl-tRNA synthetase family. In terms of assembly, monomer.

It localises to the cytoplasm. It catalyses the reaction tRNA(Arg) + L-arginine + ATP = L-arginyl-tRNA(Arg) + AMP + diphosphate. This chain is Arginine--tRNA ligase (argS), found in Salmonella typhimurium (strain SL1344).